Reading from the N-terminus, the 358-residue chain is Alanine racemase (358 aa).

Residue lysine 35 is the Proton acceptor; specific for D-alanine of the active site. Position 35 is an N6-(pyridoxal phosphate)lysine (lysine 35). Arginine 130 provides a ligand contact to substrate. Catalysis depends on tyrosine 255, which acts as the Proton acceptor; specific for L-alanine. Position 303 (methionine 303) interacts with substrate.

This sequence belongs to the alanine racemase family. Pyridoxal 5'-phosphate is required as a cofactor.

The enzyme catalyses L-alanine = D-alanine. The protein operates within amino-acid biosynthesis; D-alanine biosynthesis; D-alanine from L-alanine: step 1/1. Catalyzes the interconversion of L-alanine and D-alanine. May also act on other amino acids. The sequence is that of Alanine racemase (alr) from Shewanella baltica (strain OS223).